The sequence spans 142 residues: 3-hydroxyacyl-[acyl-carrier-protein] dehydratase FabZ (142 aa).

Residue histidine 46 is part of the active site.

This sequence belongs to the thioester dehydratase family. FabZ subfamily.

The protein localises to the cytoplasm. It carries out the reaction a (3R)-hydroxyacyl-[ACP] = a (2E)-enoyl-[ACP] + H2O. Its function is as follows. Involved in unsaturated fatty acids biosynthesis. Catalyzes the dehydration of short chain beta-hydroxyacyl-ACPs and long chain saturated and unsaturated beta-hydroxyacyl-ACPs. This Thermus thermophilus (strain ATCC BAA-163 / DSM 7039 / HB27) protein is 3-hydroxyacyl-[acyl-carrier-protein] dehydratase FabZ.